A 677-amino-acid chain; its full sequence is Methionine--tRNA ligase (677 aa).

The 'HIGH' region signature appears at 15–25 (PYANGSIHLGH). Zn(2+) contacts are provided by cysteine 146, cysteine 149, cysteine 159, and cysteine 162. The 'KMSKS' region motif lies at 333–337 (KMSKS). Lysine 336 is a binding site for ATP. In terms of domain architecture, tRNA-binding spans 575 to 677 (DFAKVDLRVA…AGAKPGHQVK (103 aa)).

This sequence belongs to the class-I aminoacyl-tRNA synthetase family. MetG type 1 subfamily. Homodimer. Zn(2+) is required as a cofactor.

It localises to the cytoplasm. The catalysed reaction is tRNA(Met) + L-methionine + ATP = L-methionyl-tRNA(Met) + AMP + diphosphate. Is required not only for elongation of protein synthesis but also for the initiation of all mRNA translation through initiator tRNA(fMet) aminoacylation. This Escherichia coli O6:K15:H31 (strain 536 / UPEC) protein is Methionine--tRNA ligase.